The primary structure comprises 300 residues: Tyrosine recombinase XerD (300 aa).

In terms of domain architecture, Core-binding (CB) spans tyrosine 5 to leucine 90. Positions histidine 111–glutamine 294 constitute a Tyr recombinase domain. Active-site residues include arginine 151, lysine 175, histidine 246, arginine 249, and histidine 272. Residue tyrosine 281 is the O-(3'-phospho-DNA)-tyrosine intermediate of the active site.

Belongs to the 'phage' integrase family. XerD subfamily. As to quaternary structure, forms a cyclic heterotetrameric complex composed of two molecules of XerC and two molecules of XerD.

The protein resides in the cytoplasm. Its function is as follows. Site-specific tyrosine recombinase, which acts by catalyzing the cutting and rejoining of the recombining DNA molecules. The XerC-XerD complex is essential to convert dimers of the bacterial chromosome into monomers to permit their segregation at cell division. It also contributes to the segregational stability of plasmids. In Shewanella oneidensis (strain ATCC 700550 / JCM 31522 / CIP 106686 / LMG 19005 / NCIMB 14063 / MR-1), this protein is Tyrosine recombinase XerD.